Reading from the N-terminus, the 2542-residue chain is Ankyrin repeat and KH domain-containing protein 1 (2542 aa).

An N-acetylmethionine modification is found at Met1. Positions 1-10 are enriched in gly residues; the sequence is MLTDSGGGGT. Disordered regions lie at residues 1–44 and 50–69; these read MLTD…IRTV and AGPA…SGTG. Over residues 20–29 the composition is skewed to low complexity; the sequence is APRSAPAGAS. Residues 57–69 show a composition bias toward gly residues; sequence GSSGGGGSGSGTG. Residues Ser101 and Ser105 each carry the phosphoserine modification. ANK repeat units lie at residues 204-233, 237-266, 271-300, 304-333, 337-366, 371-400, 404-433, 437-466, 470-499, 504-533, 534-563, 567-596, 600-629, 634-663, and 667-696; these read VDTR…SVNE, EGES…NVED, GDIT…DVNS, TGNT…NIED, NGHT…GINT, FKES…DQEH, EMHT…QVNM, SFES…NLEE, EGYT…NINA, TQET…DIEL, GCST…NVHA, TGDT…DLEH, GGRT…NVNR, NDHT…DPTH, and DGST…NVLS. Residues 775–852 adopt a coiled-coil conformation; that stretch reads LECIVEETEG…RQLQMKTQQQ (78 aa). At Ser803 the chain carries Phosphoserine. 10 ANK repeats span residues 1054-1083, 1087-1116, 1121-1150, 1154-1183, 1189-1218, 1223-1252, 1256-1285, 1291-1320, 1324-1353, and 1357-1386; these read NHDT…KIEH, KGFT…DIEA, TKDT…NKEH, SDYT…EINS, LGIS…DINA, NRNT…NVEH, TGLT…DVNA, SRDT…HIDV, KGNT…DVDA, and RKIT…QFPS. The stretch at 1415 to 1485 forms a coiled coil; that stretch reads KAKDQQAAEA…ENKPKENSEL (71 aa). 3 disordered regions span residues 1441–1517, 1534–1614, and 1632–1664; these read REES…TIGI, NVVT…SQEL, and SQEE…YKTV. A compositionally biased stretch (basic residues) spans 1453–1463; that stretch reads REKRKEKRKKK. Residues 1464 to 1483 are compositionally biased toward basic and acidic residues; sequence KEEQKRKQEEDEENKPKENS. Residues 1484-1502 are compositionally biased toward acidic residues; that stretch reads ELPEDEDEEENDEDVEQEV. The span at 1503–1517 shows a compositional bias: low complexity; the sequence is PIEPPSATTTTTIGI. The residue at position 1540 (Ser1540) is a Phosphoserine. Phosphothreonine is present on Thr1553. Residues 1590 to 1603 are compositionally biased toward low complexity; the sequence is NSDSDNLDSTDCNS. Positions 1604-1614 are enriched in polar residues; it reads ESSSGGKSQEL. Ser1632 is modified (phosphoserine). The span at 1638–1664 shows a compositional bias: polar residues; the sequence is STATSKTQTRLEGEVTPNSLSTSYKTV. Thr1653 bears the Phosphothreonine mark. A KH domain is found at 1695 to 1759; the sequence is RRSKKLSVPA…ESTRYAVQLI (65 aa). Disordered regions lie at residues 1886–1923, 1987–2106, and 2260–2367; these read NTWG…VLPS, PSVS…APLT, and NMHP…IPPP. Polar residues predominate over residues 1898–1922; sequence PGNTNSSPKHNNTSRLPNQNGTVLP. The segment covering 1987 to 1996 has biased composition (low complexity); sequence PSVSSAPITS. Polar residues predominate over residues 1997–2019; the sequence is GQAPTTFLPASTSQAQLSSQKME. Low complexity predominate over residues 2042–2077; that stretch reads CTPSSTANSCSSSASNTPGAPETHPSSSPTPTSSNT. Residues 2078 to 2106 show a composition bias toward polar residues; it reads QEEAQPSSVSDLSPMSMPFASNSEPAPLT. Low complexity-rich tracts occupy residues 2285-2308 and 2337-2349; these read LPSI…FSGI and TSAS…APPT.

This sequence belongs to the mask family. As to quaternary structure, interacts with PTPN11. Isoform 2 interacts with HIV-1 VPR. Interacts with NOD2. As to expression, ubiquitous with high expression in cervix, spleen and brain. Expressed in hematopoietic cells with increased expression in leukemia cells. Isoform 2 is highly expressed in spleen with almost no expression in muscle and brain.

It localises to the cytoplasm. May play a role as a scaffolding protein that may be associated with the abnormal phenotype of leukemia cells. Isoform 2 may possess an antiapoptotic effect and protect cells during normal cell survival through its regulation of caspases. This chain is Ankyrin repeat and KH domain-containing protein 1 (ANKHD1), found in Homo sapiens (Human).